The following is a 539-amino-acid chain: Phosphoenolpyruvate carboxykinase (ATP) (539 aa).

Substrate-binding residues include arginine 64, tyrosine 206, and lysine 212. ATP-binding positions include lysine 212, histidine 231, and 247–255; that span reads GLSGTGKTT. Mn(2+) contacts are provided by lysine 212 and histidine 231. Mn(2+) is bound at residue aspartate 268. ATP contacts are provided by residues glutamate 296, arginine 332, 448–449, and threonine 454; that span reads RI. Arginine 332 provides a ligand contact to substrate.

This sequence belongs to the phosphoenolpyruvate carboxykinase (ATP) family. As to quaternary structure, monomer. The cofactor is Mn(2+).

It localises to the cytoplasm. The enzyme catalyses oxaloacetate + ATP = phosphoenolpyruvate + ADP + CO2. It participates in carbohydrate biosynthesis; gluconeogenesis. In terms of biological role, involved in the gluconeogenesis. Catalyzes the conversion of oxaloacetate (OAA) to phosphoenolpyruvate (PEP) through direct phosphoryl transfer between the nucleoside triphosphate and OAA. The sequence is that of Phosphoenolpyruvate carboxykinase (ATP) from Salmonella gallinarum (strain 287/91 / NCTC 13346).